Consider the following 525-residue polypeptide: Heat shock factor protein 1 (525 aa).

N-acetylmethionine is present on Met-1. The tract at residues 15-120 is DNA-binding domain; that stretch reads VPAFLTKLWT…LLENIKRKVT (106 aa). Lys-80 is subject to N6-acetyllysine. Lys-91 is modified (N6-acetyllysine; alternate). Lys-91 is covalently cross-linked (Glycyl lysine isopeptide (Lys-Gly) (interchain with G-Cter in SUMO2); alternate). Position 118 is an N6-acetyllysine (Lys-118). Ser-121 is subject to Phosphoserine; by MAPKAPK2. A hydrophobic repeat HR-A/B region spans residues 130–203; sequence IKIRQDSVTK…ISLVQSNRIL (74 aa). Residue Lys-131 forms a Glycyl lysine isopeptide (Lys-Gly) (interchain with G-Cter in SUMO2) linkage. At Thr-142 the chain carries Phosphothreonine; by CK2. An N6-acetyllysine mark is found at Lys-150 and Lys-188. The segment at 203–224 is d domain; that stretch reads LGVKRKIPLMLNDGGPAHPMPK. An N6-acetyllysine; alternate modification is found at Lys-208. A Glycyl lysine isopeptide (Lys-Gly) (interchain with G-Cter in SUMO2); alternate cross-link involves residue Lys-208. The regulatory domain stretch occupies residues 221–310; that stretch reads PMPKYGRQYS…PPSPPQSPRA (90 aa). A Glycyl lysine isopeptide (Lys-Gly) (interchain with G-Cter in SUMO2) cross-link involves residue Lys-224. Residue Ser-230 is modified to Phosphoserine; by CAMK2A. The interval 266-365 is disordered; the sequence is SDITELAPGS…RPPSPLPASA (100 aa). Low complexity predominate over residues 272–283; the sequence is APGSPVASSGGS. Residues Ser-275 and Ser-292 each carry the phosphoserine modification. Lys-298 bears the N6-acetyllysine; alternate mark. A Glycyl lysine isopeptide (Lys-Gly) (interchain with G-Cter in SUMO2); alternate cross-link involves residue Lys-298. Residue Lys-298 forms a Glycyl lysine isopeptide (Lys-Gly) (interchain with G-Cter in SUMO); alternate linkage. Ser-303 bears the Phosphoserine; by GSK3-beta mark. Ser-307 carries the post-translational modification Phosphoserine; by MAPK3. Phosphoserine occurs at positions 314 and 319. Residue Ser-320 is modified to Phosphoserine; by PKA. Thr-324 bears the Phosphothreonine mark. Residue Ser-327 is modified to Phosphoserine; by MAPK12. Ser-346 is modified (phosphoserine). Position 359 is a phosphoserine; by MAPK8 (Ser-359). Residues 367–525 are transactivation domain; that stretch reads EKCLSVACLD…PPKAKDPTVS (159 aa). The segment at 380–405 is hydrophobic repeat HR-C; the sequence is LSDHLDAMDSNLDNLQTMLTSHGFSV. The 9aaTAD motif lies at 408–416; it reads STLLDLFSP. Ser-415 carries the post-translational modification Phosphoserine; by PLK1. The residue at position 440 (Ser-440) is a Phosphoserine. The interval 495-525 is disordered; sequence YFSEGDDYSDDPTISLLTGSEPPKAKDPTVS. Lys-520 carries the N6-acetyllysine modification.

The protein belongs to the HSF family. Monomer; cytoplasmic latent and transcriptionally inactive monomeric form in unstressed cells. Homotrimer; in response to stress, such as heat shock, homotrimerizes and translocates into the nucleus, binds to heat shock element (HSE) sequences in promoter of heat shock protein (HSP) genes and acquires transcriptional ability. Interacts (via monomeric form) with FKBP4; this interaction occurs in unstressed cells. Associates (via monomeric form) with HSP90 proteins in a multichaperone complex in unnstressed cell; this association maintains HSF1 in a non-DNA-binding and transcriptional inactive form by preventing HSF1 homotrimerization. Homotrimeric transactivation activity is modulated by protein-protein interactions and post-translational modifications. Interacts with HSP90AA1; this interaction is decreased in a IER5-dependent manner, promoting HSF1 accumulation in the nucleus, homotrimerization and DNA-binding activities. Part (via regulatory domain in the homotrimeric form) of a large heat shock-induced HSP90-dependent multichaperone complex at least composed of FKBP4, FKBP5, HSP90 proteins, PPID, PPP5C and PTGES3; this association maintains the HSF1 homotrimeric DNA-bound form in a transcriptionally inactive form. Interacts with BAG3 (via BAG domain); this interaction occurs in normal and heat-shocked cells promoting nuclear shuttling of HSF1 in a BAG3-dependent manner. Interacts (via homotrimeric and hyperphosphorylated form) with FKBP4; this interaction occurs upon heat shock in a HSP90-dependent multichaperone complex. Interacts (via homotrimeric form preferentially) with EEF1A proteins. In heat shocked cells, stress-denatured proteins compete with HSF1 homotrimeric DNA-bound form for association of the HSP90-dependent multichaperone complex, and hence alleviating repression of HSF1-mediated transcriptional activity. Interacts (via homotrimeric form preferentially) with DAXX; this interaction relieves homotrimeric HSF1 from repression of its transcriptional activity by HSP90-dependent multichaperone complex upon heat shock. Interacts (via D domain and preferentially with hyperphosphorylated form) with JNK1; this interaction occurs under both normal growth conditions and immediately upon heat shock. Interacts (via D domain and preferentially with hyperphosphorylated form) with MAPK3; this interaction occurs upon heat shock. Interacts with IER5 (via central region); this interaction promotes PPP2CA-induced dephosphorylation on Ser-121, Ser-307, Ser-314 and Thr-324 and HSF1 transactivation activity. Found in a ribonucleoprotein complex composed of the HSF1 homotrimeric form, translation elongation factor eEF1A proteins and non-coding RNA heat shock RNA-1 (HSR1); this complex occurs upon heat shock and stimulates HSF1 DNA-binding activity. Interacts (via transactivation domain) with HSPA1A/HSP70 and DNAJB1; these interactions result in the inhibition of heat shock- and HSF1-induced transcriptional activity during the attenuation and recovery phase from heat shock. Interacts (via Ser-303 and Ser-307 phosphorylated form) with YWHAE; this interaction promotes HSF1 sequestration in the cytoplasm in an ERK-dependent manner. Found in a complex with IER5 and PPP2CA. Interacts with TPR; this interaction increases upon heat shock and stimulates export of HSP70 mRNA. Interacts with SYMPK (via N-terminus) and CSTF2; these interactions occur upon heat shock. Interacts (via transactivation domain) with HSPA8. Interacts with EEF1D; this interaction occurs at heat shock promoter element (HSE) sequences. Interacts with MAPKAPK2. Interacts with PRKACA/PKA. Interacts (via transactivation domain) with GTF2A2. Interacts (via transactivation domain) with GTF2B. Interacts (via transactivation domain) with TBP. Interacts with CDK9, CCNT1 and EP300. Interacts (via N-terminus) with XRCC5 (via N-terminus) and XRCC6 (via N-terminus); these interactions are direct and prevent XRCC5/XRCC6 heterodimeric binding and non-homologous end joining (NHEJ) repair activities induced by ionizing radiation (IR). Interacts with PLK1; this interaction occurs during the early mitotic period, increases upon heat shock but does not modulate neither HSF1 homotrimerization and DNA-binding activities. Interacts with CDC20; this interaction occurs in mitosis in a MAD2L1-dependent manner and prevents PLK1-stimulated degradation of HSF1 by blocking the recruitment of the SCF(BTRC) ubiquitin ligase complex. Interacts with MAD2L1; this interaction occurs in mitosis. Interacts with BTRC; this interaction occurs during mitosis, induces its ubiquitin-dependent degradation following stimulus-dependent phosphorylation, a process inhibited by CDC20. Interacts with HSP90AA1 and HSP90AB1. Forms a complex with TTC5/STRAP and p300/EP300; these interactions augment chromatin-bound HSF1 and p300/EP300 histone acetyltransferase activity. Phosphorylated. Phosphorylated in unstressed cells; this phosphorylation is constitutive and implicated in the repression of HSF1 transcriptional activity. Phosphorylated on Ser-121 by MAPKAPK2; this phosphorylation promotes interaction with HSP90 proteins and inhibits HSF1 homotrimerization, DNA-binding and transactivation activities. Phosphorylation on Ser-303 by GSK3B/GSK3-beta and on Ser-307 by MAPK3 within the regulatory domain is involved in the repression of HSF1 transcriptional activity and occurs in a RAF1-dependent manner. Phosphorylation on Ser-303 and Ser-307 increases HSF1 nuclear export in a YWHAE- and XPO1/CRM1-dependent manner. Phosphorylation on Ser-307 is a prerequisite for phosphorylation on Ser-303. According to, Ser-303 is not phosphorylated in unstressed cells. Phosphorylated on Ser-415 by PLK1; phosphorylation promotes nuclear translocation upon heat shock. Hyperphosphorylated upon heat shock and during the attenuation and recovery phase period of the heat shock response. Phosphorylated on Thr-142; this phosphorylation increases HSF1 transactivation activity upon heat shock. Phosphorylation on Ser-230 by CAMK2A; this phosphorylation enhances HSF1 transactivation activity upon heat shock. Phosphorylation on Ser-327 by MAPK12; this phosphorylation enhances HSF1 nuclear translocation, homotrimerization and transactivation activities upon heat shock. Phosphorylated on Ser-320 by PRKACA/PKA; this phosphorylation promotes nuclear localization and transcriptional activity upon heat shock. Phosphorylated on Ser-359 by MAPK8; this phosphorylation occurs upon heat shock, induces HSF1 translocation into nuclear stress bodies and negatively regulates transactivation activity. Neither basal nor stress-inducible phosphorylation on Ser-230, Ser-292, Ser-303, Ser-307, Ser-314, Ser-319, Ser-320, Thr-324, Ser-327, Ser-339, Ser-346, Ser-359 and Ser-364 within the regulatory domain is involved in the regulation of HSF1 subcellular localization or DNA-binding activity; however, it negatively regulates HSF1 transactivation activity. Phosphorylated by PLK1 in the early mitotic period; this phosphorylation regulates HSF1 localization to the spindle pole, the recruitment of the SCF(BTRC) ubiquitin ligase complex inducing HSF1 degradation, and hence mitotic progression. Dephosphorylated on Ser-121, Ser-307, Ser-314, Thr-324 by phosphatase PPP2CA in an IER5-dependent manner, leading to HSF1-mediated transactivation activity. Post-translationally, sumoylated with SUMO1 and SUMO2 upon heat shock in a ERK2-dependent manner. Sumoylated by SUMO1 on Lys-298; sumoylation occurs upon heat shock and promotes its localization to nuclear stress bodies and DNA-binding activity. Phosphorylation on Ser-303 and Ser-307 is probably a prerequisite for sumoylation. In terms of processing, acetylated on Lys-118; this acetylation is decreased in a IER5-dependent manner. Acetylated on Lys-118, Lys-208 and Lys-298; these acetylations occur in a EP300-dependent manner. Acetylated on Lys-80; this acetylation inhibits DNA-binding activity upon heat shock. Deacetylated on Lys-80 by SIRT1; this deacetylation increases DNA-binding activity. Ubiquitinated by SCF(BTRC) and degraded following stimulus-dependent phosphorylation by PLK1 in mitosis. Polyubiquitinated. Undergoes proteasomal degradation upon heat shock and during the attenuation and recovery phase period of the heat shock response.

The protein localises to the nucleus. It is found in the cytoplasm. It localises to the nucleoplasm. Its subcellular location is the perinuclear region. The protein resides in the cytoskeleton. The protein localises to the spindle pole. It is found in the microtubule organizing center. It localises to the centrosome. Its subcellular location is the chromosome. The protein resides in the centromere. The protein localises to the kinetochore. Functionally, functions as a stress-inducible and DNA-binding transcription factor that plays a central role in the transcriptional activation of the heat shock response (HSR), leading to the expression of a large class of molecular chaperones, heat shock proteins (HSPs), that protect cells from cellular insult damage. In unstressed cells, is present in a HSP90-containing multichaperone complex that maintains it in a non-DNA-binding inactivated monomeric form. Upon exposure to heat and other stress stimuli, undergoes homotrimerization and activates HSP gene transcription through binding to site-specific heat shock elements (HSEs) present in the promoter regions of HSP genes. Upon heat shock stress, forms a chromatin-associated complex with TTC5/STRAP and p300/EP300 to stimulate HSR transcription, therefore increasing cell survival. Activation is reversible, and during the attenuation and recovery phase period of the HSR, returns to its unactivated form. Binds to inverted 5'-NGAAN-3' pentamer DNA sequences. Binds to chromatin at heat shock gene promoters. Activates transcription of transcription factor FOXR1 which in turn activates transcription of the heat shock chaperones HSPA1A and HSPA6 and the antioxidant NADPH-dependent reductase DHRS2. Also serves several other functions independently of its transcriptional activity. Involved in the repression of Ras-induced transcriptional activation of the c-fos gene in heat-stressed cells. Positively regulates pre-mRNA 3'-end processing and polyadenylation of HSP70 mRNA upon heat-stressed cells in a symplekin (SYMPK)-dependent manner. Plays a role in nuclear export of stress-induced HSP70 mRNA. Plays a role in the regulation of mitotic progression. Also plays a role as a negative regulator of non-homologous end joining (NHEJ) repair activity in a DNA damage-dependent manner. Involved in stress-induced cancer cell proliferation in a IER5-dependent manner. This is Heat shock factor protein 1 from Bos taurus (Bovine).